We begin with the raw amino-acid sequence, 172 residues long: MMPTERIAVYPGTFDPVTNGHLDIISRAARLVDRLTVGVAVNAGKGPLFSLEERVEMVRVAVDKLPTNGATITVVPFANLLMDFACAQGASMIFRGLRAISDFEYEFQMCGMNSRLNSKVETVFLMASERSQFISSRFVKEIGRLGGDIGGFVPAHVRDRLLDRFEEDAESA.

T13 serves as a coordination point for substrate. Residues 13-14 (TF) and H21 each bind ATP. Residues K45, L81, and R95 each contribute to the substrate site. Residues 96–98 (GLR), E106, and 131–137 (SQFISSR) contribute to the ATP site.

The protein belongs to the bacterial CoaD family. As to quaternary structure, homohexamer. Mg(2+) is required as a cofactor.

Its subcellular location is the cytoplasm. The enzyme catalyses (R)-4'-phosphopantetheine + ATP + H(+) = 3'-dephospho-CoA + diphosphate. It functions in the pathway cofactor biosynthesis; coenzyme A biosynthesis; CoA from (R)-pantothenate: step 4/5. In terms of biological role, reversibly transfers an adenylyl group from ATP to 4'-phosphopantetheine, yielding dephospho-CoA (dPCoA) and pyrophosphate. The sequence is that of Phosphopantetheine adenylyltransferase from Rhodospirillum rubrum (strain ATCC 11170 / ATH 1.1.1 / DSM 467 / LMG 4362 / NCIMB 8255 / S1).